The following is a 181-amino-acid chain: 3-hydroxyanthranilate 3,4-dioxygenase (181 aa).

R46 serves as a coordination point for O2. Fe cation contacts are provided by H50, E56, and H95. E56 is a substrate binding site. Residues R99 and E109 each contribute to the substrate site.

This sequence belongs to the 3-HAO family. It depends on Fe(2+) as a cofactor.

It is found in the cytoplasm. The enzyme catalyses 3-hydroxyanthranilate + O2 = (2Z,4Z)-2-amino-3-carboxymuconate 6-semialdehyde. Its pathway is cofactor biosynthesis; NAD(+) biosynthesis; quinolinate from L-kynurenine: step 3/3. Functionally, catalyzes the oxidative ring opening of 3-hydroxyanthranilate to 2-amino-3-carboxymuconate semialdehyde, which spontaneously cyclizes to quinolinate. This Mycosarcoma maydis (Corn smut fungus) protein is 3-hydroxyanthranilate 3,4-dioxygenase.